We begin with the raw amino-acid sequence, 114 residues long: Nucleoid-associated protein PCC8801_2554 (114 aa).

Belongs to the YbaB/EbfC family. As to quaternary structure, homodimer.

It is found in the cytoplasm. Its subcellular location is the nucleoid. Binds to DNA and alters its conformation. May be involved in regulation of gene expression, nucleoid organization and DNA protection. The chain is Nucleoid-associated protein PCC8801_2554 from Rippkaea orientalis (strain PCC 8801 / RF-1) (Cyanothece sp. (strain PCC 8801)).